The following is a 171-amino-acid chain: NADH-quinone oxidoreductase subunit C (171 aa).

The protein belongs to the complex I 30 kDa subunit family. As to quaternary structure, NDH-1 is composed of 14 different subunits. Subunits NuoB, C, D, E, F, and G constitute the peripheral sector of the complex.

It localises to the cell membrane. It catalyses the reaction a quinone + NADH + 5 H(+)(in) = a quinol + NAD(+) + 4 H(+)(out). Its function is as follows. NDH-1 shuttles electrons from NADH, via FMN and iron-sulfur (Fe-S) centers, to quinones in the respiratory chain. The immediate electron acceptor for the enzyme in this species is believed to be ubiquinone. Couples the redox reaction to proton translocation (for every two electrons transferred, four hydrogen ions are translocated across the cytoplasmic membrane), and thus conserves the redox energy in a proton gradient. In Herpetosiphon aurantiacus (strain ATCC 23779 / DSM 785 / 114-95), this protein is NADH-quinone oxidoreductase subunit C.